Consider the following 200-residue polypeptide: ATP-dependent Clp protease proteolytic subunit 3 (200 aa).

The Nucleophile role is filled by serine 101. Histidine 126 is a catalytic residue.

The protein belongs to the peptidase S14 family. Fourteen ClpP subunits assemble into 2 heptameric rings which stack back to back to give a disk-like structure with a central cavity, resembling the structure of eukaryotic proteasomes.

It is found in the cytoplasm. It carries out the reaction Hydrolysis of proteins to small peptides in the presence of ATP and magnesium. alpha-casein is the usual test substrate. In the absence of ATP, only oligopeptides shorter than five residues are hydrolyzed (such as succinyl-Leu-Tyr-|-NHMec, and Leu-Tyr-Leu-|-Tyr-Trp, in which cleavage of the -Tyr-|-Leu- and -Tyr-|-Trp bonds also occurs).. Cleaves peptides in various proteins in a process that requires ATP hydrolysis. Has a chymotrypsin-like activity. Plays a major role in the degradation of misfolded proteins. In Parasynechococcus marenigrum (strain WH8102), this protein is ATP-dependent Clp protease proteolytic subunit 3.